The following is a 65-amino-acid chain: uncharacterized protein (65 aa).

This is an uncharacterized protein from Invertebrate iridescent virus 6 (IIV-6).